A 143-amino-acid polypeptide reads, in one-letter code: Transcriptional regulator MraZ (143 aa).

SpoVT-AbrB domains follow at residues Glu-5–Glu-47 and Ala-76–Leu-119.

It belongs to the MraZ family. In terms of assembly, forms oligomers.

It is found in the cytoplasm. Its subcellular location is the nucleoid. This chain is Transcriptional regulator MraZ, found in Halalkalibacterium halodurans (strain ATCC BAA-125 / DSM 18197 / FERM 7344 / JCM 9153 / C-125) (Bacillus halodurans).